We begin with the raw amino-acid sequence, 419 residues long: MSRWKIYTPDGVQDILFDECYKKREIEKRIRNTFRSYGYYEIETPTIEFFDVFSSEIEHFPQESMVKFFDQKGRILVLRPDITVPVARITATKNRDVQVPIKYSYIGNVFRFNEVGGGRQNEFTQAGVEMLGDSSSESDAEIIAMAINTLKSVGLKEFKIEIGQVEFFKGLAEEAGFSNEDIDAISKQIDKKDLVGVEEILNRYDISTELREIVLKLTGLFGSVDVIKEFKKASINGRSLKAIENVEEVVSILCDYGLSEYVSIDLGMLKSLNYDTGITFRGFTNGVGFPILSGARYDNLTSSFGKECPATGFSLRINMLMTAMEKAGHTFERPSVDSLVCYEKTNRKRAIEIAEALRKQDMKIETFVLTKGIDQAKKYAASKKIGGIIYIRDNDKITVYDIKNNITEETSFDTLLNNQ.

It belongs to the class-II aminoacyl-tRNA synthetase family. HisZ subfamily. In terms of assembly, heteromultimer composed of HisG and HisZ subunits.

It localises to the cytoplasm. It functions in the pathway amino-acid biosynthesis; L-histidine biosynthesis; L-histidine from 5-phospho-alpha-D-ribose 1-diphosphate: step 1/9. In terms of biological role, required for the first step of histidine biosynthesis. May allow the feedback regulation of ATP phosphoribosyltransferase activity by histidine. The chain is ATP phosphoribosyltransferase regulatory subunit from Ruminiclostridium cellulolyticum (strain ATCC 35319 / DSM 5812 / JCM 6584 / H10) (Clostridium cellulolyticum).